The chain runs to 95 residues: Antitoxin VapB (95 aa).

Antitoxin component of a type II toxin-antitoxin (TA) system. Partially neutralizes the RNase activity of cognate toxin VapC. The chain is Antitoxin VapB from Rickettsia bellii (strain RML369-C).